The sequence spans 919 residues: MTDPKVPRQRRIIDRRKLAAAVEALAEQQGEKARPAVLKVLREALEKGRDELSQRLLDRPSAGHQITAGHAFLVDQLVRVIFDHVTTHLYPVANRSSSERIAVLAVGGYGRAEMAPQSDVDIAFLHPSRRTPWCEQVTEAMLYFLWDLGFKVGQSSRTPEDMVRMAREDLTIRTALLEARFVWGDRELYDEARKRFWSEVVNGTERQFVAEKLAERDARHERMGGTRYVVEPNVKEGKGGLRDLQTLYWIGKYIHRARGAAELVDAGLLTETEYHGFRRAEGFLLAVRCHLHEITGRPEDRLTFDFQKQIAERMRFAERREKSAVERFMQYYFLQVKRVGSLTGVFLAQMDQQFARKRARTGLLAGFNAKSRMLKGYTVFGGKIAAPGDNWFRDDPVRLIEIFQLAEANGLEIDPRSMRQADRDSVLIKDQVRNDPRANAIFLDLLCGRNDPETALRWMNEAGVFGKFVPDFGRVNAQMQFNMYHHYTVDEHTIRAIGFLSKIEKGELAKEHPRSTREIHKVKSRRVAFVAALLHDIAKGRGGDHSILGAEVAEELCPRFGLDEDETDLVAWLVLQHLLMSSTAQKRDLTDPKTIEDFVAEVQSLERLRHLAILTSVDIRAVGPGTWNSWKGQLLGELYDAAHERLRLGHMKHHRSERVAAKKEAVREALGGKAALLEKHGRLLPDSYWIAEPENVISRNIVQYDVAREISEDLSIHCEFDEERGATLVTVIAADHPGLFYRIAGGIHLAGGNIIDARIHTTRNGWAIDNYLVQDPVGQPFAEERQLARIEQAIADAIANRGELVPKLAKRPLKQTRAGAFDVRPRVLFDNDASGRFTVIEVNARDRAALLNRLGRALFENQVIVQSAHITAYGERAADTFYVTDLTGAKITDESRMDTIRQALLDAASDARQAELEPA.

The segment at M1–M373 is uridylyltransferase. Residues L374–T727 are uridylyl-removing. Residues V489–L611 enclose the HD domain. 2 ACT domains span residues L728–R811 and V839–A919.

The protein belongs to the GlnD family. It depends on Mg(2+) as a cofactor.

It catalyses the reaction [protein-PII]-L-tyrosine + UTP = [protein-PII]-uridylyl-L-tyrosine + diphosphate. The enzyme catalyses [protein-PII]-uridylyl-L-tyrosine + H2O = [protein-PII]-L-tyrosine + UMP + H(+). Its activity is regulated as follows. Uridylyltransferase (UTase) activity is inhibited by glutamine, while glutamine activates uridylyl-removing (UR) activity. Modifies, by uridylylation and deuridylylation, the PII regulatory proteins (GlnB and homologs), in response to the nitrogen status of the cell that GlnD senses through the glutamine level. Under low glutamine levels, catalyzes the conversion of the PII proteins and UTP to PII-UMP and PPi, while under higher glutamine levels, GlnD hydrolyzes PII-UMP to PII and UMP (deuridylylation). Thus, controls uridylylation state and activity of the PII proteins, and plays an important role in the regulation of nitrogen assimilation and metabolism. The polypeptide is Bifunctional uridylyltransferase/uridylyl-removing enzyme (Erythrobacter litoralis (strain HTCC2594)).